Here is a 133-residue protein sequence, read N- to C-terminus: Small ribosomal subunit protein uS9 (133 aa).

A disordered region spans residues 111–133; it reads PRRSESKKFGGPGARARKQKSYR.

It belongs to the universal ribosomal protein uS9 family.

The polypeptide is Small ribosomal subunit protein uS9 (Methanosphaera stadtmanae (strain ATCC 43021 / DSM 3091 / JCM 11832 / MCB-3)).